Consider the following 173-residue polypeptide: Adenine phosphoribosyltransferase (173 aa).

It belongs to the purine/pyrimidine phosphoribosyltransferase family. Homodimer.

It localises to the cytoplasm. It carries out the reaction AMP + diphosphate = 5-phospho-alpha-D-ribose 1-diphosphate + adenine. Its pathway is purine metabolism; AMP biosynthesis via salvage pathway; AMP from adenine: step 1/1. Its function is as follows. Catalyzes a salvage reaction resulting in the formation of AMP, that is energically less costly than de novo synthesis. The protein is Adenine phosphoribosyltransferase of Thermoanaerobacter sp. (strain X514).